Reading from the N-terminus, the 270-residue chain is NAD kinase (270 aa).

D45 acts as the Proton acceptor in catalysis. Residues 45–46 (DG), 121–122 (NE), R147, D149, 160–165 (TAYNKS), and A184 each bind NAD(+).

This sequence belongs to the NAD kinase family. A divalent metal cation is required as a cofactor.

It is found in the cytoplasm. The catalysed reaction is NAD(+) + ATP = ADP + NADP(+) + H(+). Functionally, involved in the regulation of the intracellular balance of NAD and NADP, and is a key enzyme in the biosynthesis of NADP. Catalyzes specifically the phosphorylation on 2'-hydroxyl of the adenosine moiety of NAD to yield NADP. The sequence is that of NAD kinase from Limosilactobacillus reuteri subsp. reuteri (strain JCM 1112) (Lactobacillus reuteri).